A 278-amino-acid polypeptide reads, in one-letter code: 3-methyl-2-oxobutanoate hydroxymethyltransferase (278 aa).

2 residues coordinate Mg(2+): Asp43 and Asp82. Residues 43–44 (DS), Asp82, and Lys112 contribute to the 3-methyl-2-oxobutanoate site. Glu114 is a binding site for Mg(2+). The Proton acceptor role is filled by Glu181.

It belongs to the PanB family. Homodecamer; pentamer of dimers. The cofactor is Mg(2+).

Its subcellular location is the cytoplasm. The enzyme catalyses 3-methyl-2-oxobutanoate + (6R)-5,10-methylene-5,6,7,8-tetrahydrofolate + H2O = 2-dehydropantoate + (6S)-5,6,7,8-tetrahydrofolate. Its pathway is cofactor biosynthesis; (R)-pantothenate biosynthesis; (R)-pantoate from 3-methyl-2-oxobutanoate: step 1/2. Its function is as follows. Catalyzes the reversible reaction in which hydroxymethyl group from 5,10-methylenetetrahydrofolate is transferred onto alpha-ketoisovalerate to form ketopantoate. The sequence is that of 3-methyl-2-oxobutanoate hydroxymethyltransferase from Bacillus cereus (strain AH187).